The chain runs to 208 residues: Ciliary-associated calcium-binding coiled-coil protein 1 (208 aa).

Testis-specific. Expressed in spermatocytes and round spermatids (at protein level).

Its subcellular location is the cytoplasm. It is found in the cytoskeleton. The protein localises to the microtubule organizing center. The protein resides in the centrosome. It localises to the cell projection. Its subcellular location is the cilium. It is found in the flagellum. Functionally, calcium-binding protein. May be involved in the control of sperm flagellar movement. The sequence is that of Ciliary-associated calcium-binding coiled-coil protein 1 from Mus musculus (Mouse).